The sequence spans 244 residues: 3-oxoacyl-[acyl-carrier-protein] reductase FabG (244 aa).

Residues 12 to 15 (GASR), Thr37, 59 to 60 (NV), and Asn86 contribute to the NADP(+) site. Position 138 (Ser138) interacts with substrate. The active-site Proton acceptor is the Tyr151. NADP(+) contacts are provided by residues 151–155 (YAAAK) and Ile184.

Belongs to the short-chain dehydrogenases/reductases (SDR) family. In terms of assembly, homotetramer.

The enzyme catalyses a (3R)-hydroxyacyl-[ACP] + NADP(+) = a 3-oxoacyl-[ACP] + NADPH + H(+). The protein operates within lipid metabolism; fatty acid biosynthesis. Its function is as follows. Catalyzes the NADPH-dependent reduction of beta-ketoacyl-ACP substrates to beta-hydroxyacyl-ACP products, the first reductive step in the elongation cycle of fatty acid biosynthesis. The protein is 3-oxoacyl-[acyl-carrier-protein] reductase FabG (fabG) of Vibrio cholerae serotype O1 (strain ATCC 39315 / El Tor Inaba N16961).